Reading from the N-terminus, the 101-residue chain is NAD(P)H-quinone oxidoreductase subunit 4L, chloroplastic (101 aa).

3 consecutive transmembrane segments (helical) span residues 2 to 22 (MLEY…YGLI), 32 to 52 (MCLE…SDFF), and 61 to 81 (ILSI…PAIV).

This sequence belongs to the complex I subunit 4L family. As to quaternary structure, NDH is composed of at least 16 different subunits, 5 of which are encoded in the nucleus.

The protein resides in the plastid. It localises to the chloroplast thylakoid membrane. The catalysed reaction is a plastoquinone + NADH + (n+1) H(+)(in) = a plastoquinol + NAD(+) + n H(+)(out). The enzyme catalyses a plastoquinone + NADPH + (n+1) H(+)(in) = a plastoquinol + NADP(+) + n H(+)(out). Functionally, NDH shuttles electrons from NAD(P)H:plastoquinone, via FMN and iron-sulfur (Fe-S) centers, to quinones in the photosynthetic chain and possibly in a chloroplast respiratory chain. The immediate electron acceptor for the enzyme in this species is believed to be plastoquinone. Couples the redox reaction to proton translocation, and thus conserves the redox energy in a proton gradient. This Populus alba (White poplar) protein is NAD(P)H-quinone oxidoreductase subunit 4L, chloroplastic.